The primary structure comprises 237 residues: N-alpha-acetyltransferase 40 (237 aa).

Gly2 carries the N-myristoyl glycine lipid modification. The N-acetyltransferase domain occupies 63–216; it reads TALSPDTVEW…EDCSYEILSR (154 aa). Substrate-binding positions include Tyr85, 127–129, and Tyr138; that span reads DVE. Acetyl-CoA-binding positions include 140–142 and 148–153; these read VQL and RKGLGK. Thr174 is a substrate binding site. Asn179 serves as a coordination point for acetyl-CoA. Tyr211 lines the substrate pocket.

The protein belongs to the acetyltransferase family. NAA40 subfamily.

The protein localises to the cytoplasm. It localises to the nucleus. It catalyses the reaction N-terminal L-seryl-[histone H4] + acetyl-CoA = N-terminal N(alpha)-acetyl-L-seryl-[histone H4] + CoA + H(+). It carries out the reaction N-terminal L-seryl-[histone H2A] + acetyl-CoA = N-terminal N(alpha)-acetyl-L-seryl-[histone H2A] + CoA + H(+). Its function is as follows. N-alpha-acetyltransferase that specifically mediates the acetylation of the N-terminal residues of histones H4 and H2A. In contrast to other N-alpha-acetyltransferase, has a very specific selectivity for histones H4 and H2A N-terminus and specifically recognizes the 'Ser-Gly-Arg-Gly sequence'. The sequence is that of N-alpha-acetyltransferase 40 (naa40) from Danio rerio (Zebrafish).